The chain runs to 252 residues: Hydroxyacylglutathione hydrolase (252 aa).

7 residues coordinate Zn(2+): histidine 52, histidine 54, aspartate 56, histidine 57, histidine 107, aspartate 128, and histidine 166.

It belongs to the metallo-beta-lactamase superfamily. Glyoxalase II family. In terms of assembly, monomer. The cofactor is Zn(2+).

The enzyme catalyses an S-(2-hydroxyacyl)glutathione + H2O = a 2-hydroxy carboxylate + glutathione + H(+). The protein operates within secondary metabolite metabolism; methylglyoxal degradation; (R)-lactate from methylglyoxal: step 2/2. Its function is as follows. Thiolesterase that catalyzes the hydrolysis of S-D-lactoyl-glutathione to form glutathione and D-lactic acid. The polypeptide is Hydroxyacylglutathione hydrolase (Neisseria meningitidis serogroup C / serotype 2a (strain ATCC 700532 / DSM 15464 / FAM18)).